We begin with the raw amino-acid sequence, 161 residues long: MRIGVYPGSFDPVTNGHMDIVERSVGLFDRLIVAVAKNAQKKPLFSVEERVEILKNVLKKYPNIVVDTFDGLTVTYALQQGAIAIVRGLRAFSDFENEFIFALTNKKLAPDLETVYLMTRAEYSFISSTTVKEVASFKGSLSGMVPEIVAQKIQDKYGYGK.

Ser9 lines the substrate pocket. Residues 9–10 and His17 contribute to the ATP site; that span reads SF. Substrate is bound by residues Lys41, Thr73, and Arg87. ATP contacts are provided by residues 88–90, Glu98, and 123–129; these read GLR and YSFISST.

The protein belongs to the bacterial CoaD family. Homohexamer. Mg(2+) is required as a cofactor.

It localises to the cytoplasm. It carries out the reaction (R)-4'-phosphopantetheine + ATP + H(+) = 3'-dephospho-CoA + diphosphate. The protein operates within cofactor biosynthesis; coenzyme A biosynthesis; CoA from (R)-pantothenate: step 4/5. In terms of biological role, reversibly transfers an adenylyl group from ATP to 4'-phosphopantetheine, yielding dephospho-CoA (dPCoA) and pyrophosphate. This Desulforamulus reducens (strain ATCC BAA-1160 / DSM 100696 / MI-1) (Desulfotomaculum reducens) protein is Phosphopantetheine adenylyltransferase.